A 198-amino-acid polypeptide reads, in one-letter code: Ribose 1,5-bisphosphate phosphokinase PhnN (198 aa).

25–32 is an ATP binding site; sequence GPSGAGKD.

Belongs to the ribose 1,5-bisphosphokinase family.

The catalysed reaction is alpha-D-ribose 1,5-bisphosphate + ATP = 5-phospho-alpha-D-ribose 1-diphosphate + ADP. The protein operates within metabolic intermediate biosynthesis; 5-phospho-alpha-D-ribose 1-diphosphate biosynthesis; 5-phospho-alpha-D-ribose 1-diphosphate from D-ribose 5-phosphate (route II): step 3/3. Its function is as follows. Catalyzes the phosphorylation of ribose 1,5-bisphosphate to 5-phospho-D-ribosyl alpha-1-diphosphate (PRPP). The chain is Ribose 1,5-bisphosphate phosphokinase PhnN from Bradyrhizobium diazoefficiens (strain JCM 10833 / BCRC 13528 / IAM 13628 / NBRC 14792 / USDA 110).